Consider the following 419-residue polypeptide: Cyclin-B2-2 (419 aa).

Positions 79 to 116 (QPSSAPLAPIGSERQKRTADSAFHGPADMECTKITSDD) are disordered.

Belongs to the cyclin family. Cyclin AB subfamily. As to quaternary structure, interacts with CDKB2-1. Expressed in the intercalary meristem and the elongation zone of internodes. Expressed in adventitious roots at all nodes under submergence conditions.

The protein resides in the nucleus. In terms of biological role, involved in the control of the cell cycle at the G2/M (mitosis) transition. May associate to CDKB2-1 and activate CDKB2-1 kinase to promote cell division. The protein is Cyclin-B2-2 (CYCB2-2) of Oryza sativa subsp. indica (Rice).